The primary structure comprises 160 residues: 2-C-methyl-D-erythritol 2,4-cyclodiphosphate synthase (160 aa).

A divalent metal cation is bound by residues D11 and H13. 4-CDP-2-C-methyl-D-erythritol 2-phosphate-binding positions include 11–13 (DVH) and 37–38 (HS). H45 is a binding site for a divalent metal cation. 4-CDP-2-C-methyl-D-erythritol 2-phosphate contacts are provided by residues 59–61 (DIG), 64–68 (FPDTD), 135–138 (TTTE), F142, and R145.

It belongs to the IspF family. As to quaternary structure, homotrimer. A divalent metal cation is required as a cofactor.

It catalyses the reaction 4-CDP-2-C-methyl-D-erythritol 2-phosphate = 2-C-methyl-D-erythritol 2,4-cyclic diphosphate + CMP. Its pathway is isoprenoid biosynthesis; isopentenyl diphosphate biosynthesis via DXP pathway; isopentenyl diphosphate from 1-deoxy-D-xylulose 5-phosphate: step 4/6. In terms of biological role, involved in the biosynthesis of isopentenyl diphosphate (IPP) and dimethylallyl diphosphate (DMAPP), two major building blocks of isoprenoid compounds. Catalyzes the conversion of 4-diphosphocytidyl-2-C-methyl-D-erythritol 2-phosphate (CDP-ME2P) to 2-C-methyl-D-erythritol 2,4-cyclodiphosphate (ME-CPP) with a corresponding release of cytidine 5-monophosphate (CMP). This is 2-C-methyl-D-erythritol 2,4-cyclodiphosphate synthase from Alcanivorax borkumensis (strain ATCC 700651 / DSM 11573 / NCIMB 13689 / SK2).